A 356-amino-acid polypeptide reads, in one-letter code: Tyrosine recombinase XerS (356 aa).

A Core-binding (CB) domain is found at Val-16–Thr-121. Positions Gly-169–Asp-354 constitute a Tyr recombinase domain. Catalysis depends on residues Arg-210, Lys-234, His-306, Arg-309, and His-332. The O-(3'-phospho-DNA)-tyrosine intermediate role is filled by Tyr-341.

The protein belongs to the 'phage' integrase family. XerS subfamily.

Its subcellular location is the cytoplasm. With respect to regulation, ftsK is required for recombination. Functionally, site-specific tyrosine recombinase, which acts by catalyzing the cutting and rejoining of the recombining DNA molecules. Essential to convert dimers of the bacterial chromosome into monomers to permit their segregation at cell division. The polypeptide is Tyrosine recombinase XerS (Lactococcus lactis subsp. cremoris (strain SK11)).